A 440-amino-acid polypeptide reads, in one-letter code: R3H and coiled-coil domain-containing protein 1 (440 aa).

The 66-residue stretch at 16 to 81 folds into the R3H domain; sequence NDFVHRIQEE…KRRTVICHQD (66 aa). The segment at 154 to 225 is disordered; sequence TSVLKREAPA…LGPESQSGKG (72 aa). Residues 157 to 168 are compositionally biased toward basic and acidic residues; the sequence is LKREAPAGRDPE. At S236 the chain carries Phosphoserine. Residues 242–300 are a coiled coil; that stretch reads LEKGKESLLEKRLVAEEEEDEEEVEEDGPSSCSEDDYSELLQEITDNLTKKEIQIEKIH. Residues 254–276 are disordered; that stretch reads LVAEEEEDEEEVEEDGPSSCSED. A compositionally biased stretch (acidic residues) spans 257-276; it reads EEEEDEEEVEEDGPSSCSED.

The polypeptide is R3H and coiled-coil domain-containing protein 1 (Homo sapiens (Human)).